The chain runs to 379 residues: UDP-4-amino-4-deoxy-L-arabinose--oxoglutarate aminotransferase (379 aa).

The residue at position 182 (Lys182) is an N6-(pyridoxal phosphate)lysine.

It belongs to the DegT/DnrJ/EryC1 family. ArnB subfamily. In terms of assembly, homodimer. Requires pyridoxal 5'-phosphate as cofactor.

The enzyme catalyses UDP-4-amino-4-deoxy-beta-L-arabinose + 2-oxoglutarate = UDP-beta-L-threo-pentopyranos-4-ulose + L-glutamate. The protein operates within nucleotide-sugar biosynthesis; UDP-4-deoxy-4-formamido-beta-L-arabinose biosynthesis; UDP-4-deoxy-4-formamido-beta-L-arabinose from UDP-alpha-D-glucuronate: step 2/3. It participates in bacterial outer membrane biogenesis; lipopolysaccharide biosynthesis. Functionally, catalyzes the conversion of UDP-4-keto-arabinose (UDP-Ara4O) to UDP-4-amino-4-deoxy-L-arabinose (UDP-L-Ara4N). The modified arabinose is attached to lipid A and is required for resistance to polymyxin and cationic antimicrobial peptides. The polypeptide is UDP-4-amino-4-deoxy-L-arabinose--oxoglutarate aminotransferase (Escherichia coli O81 (strain ED1a)).